The following is a 105-amino-acid chain: Met repressor (105 aa).

Belongs to the MetJ family. Homodimer.

The protein resides in the cytoplasm. This regulatory protein, when combined with SAM (S-adenosylmethionine) represses the expression of the methionine regulon and of enzymes involved in SAM synthesis. The polypeptide is Met repressor (Vibrio cholerae serotype O1 (strain ATCC 39541 / Classical Ogawa 395 / O395)).